The primary structure comprises 421 residues: Anhydromevalonate phosphate decarboxylase (421 aa).

Mn(2+) is bound by residues N131 and E194. D240 (proton acceptor) is an active-site residue.

The protein belongs to the UbiD family. The cofactor is prenylated FMN. Mn(2+) serves as cofactor.

The enzyme catalyses (2E)-3-methyl-5-phosphooxypent-2-enoate + H(+) = isopentenyl phosphate + CO2. Its pathway is isoprenoid biosynthesis; isopentenyl diphosphate biosynthesis via mevalonate pathway. Functionally, catalyzes the conversion of trans-anhydromevalonate 5-phosphate (tAHMP) into isopentenyl phosphate. Involved in the archaeal mevalonate (MVA) pathway, which provides fundamental precursors for isoprenoid biosynthesis, such as isopentenyl diphosphate (IPP) and dimethylallyl diphosphate (DMAPP). The sequence is that of Anhydromevalonate phosphate decarboxylase from Methanocaldococcus jannaschii (strain ATCC 43067 / DSM 2661 / JAL-1 / JCM 10045 / NBRC 100440) (Methanococcus jannaschii).